Consider the following 320-residue polypeptide: ATP-dependent 6-phosphofructokinase (320 aa).

Position 11 (glycine 11) interacts with ATP. 21 to 25 contributes to the ADP binding site; that stretch reads RAIAR. ATP is bound by residues 72-73 and 102-105; these read RF and GDGS. Residue aspartate 103 coordinates Mg(2+). Substrate-binding positions include 125-127, arginine 162, and 169-171; these read TID and MGR. Aspartate 127 functions as the Proton acceptor in the catalytic mechanism. ADP is bound by residues 185 to 187 and 213 to 215; these read GAD and KDH. Substrate contacts are provided by residues glutamate 222, arginine 243, and 249–252; that span reads HIQR.

It belongs to the phosphofructokinase type A (PFKA) family. ATP-dependent PFK group I subfamily. Prokaryotic clade 'B1' sub-subfamily. In terms of assembly, homotetramer. The cofactor is Mg(2+).

Its subcellular location is the cytoplasm. It carries out the reaction beta-D-fructose 6-phosphate + ATP = beta-D-fructose 1,6-bisphosphate + ADP + H(+). The protein operates within carbohydrate degradation; glycolysis; D-glyceraldehyde 3-phosphate and glycerone phosphate from D-glucose: step 3/4. Allosterically activated by ADP and other diphosphonucleosides, and allosterically inhibited by phosphoenolpyruvate. Functionally, catalyzes the phosphorylation of D-fructose 6-phosphate to fructose 1,6-bisphosphate by ATP, the first committing step of glycolysis. In Ligilactobacillus salivarius (strain UCC118) (Lactobacillus salivarius), this protein is ATP-dependent 6-phosphofructokinase.